Reading from the N-terminus, the 786-residue chain is Endonuclease MutS2 (786 aa).

332–339 (GPNTGGKT) is an ATP binding site. Residues 711-786 (IDLRGMDSEE…GTGVTVVILK (76 aa)) enclose the Smr domain.

Belongs to the DNA mismatch repair MutS family. MutS2 subfamily. Homodimer. Binds to stalled ribosomes, contacting rRNA.

Its function is as follows. Endonuclease that is involved in the suppression of homologous recombination and thus may have a key role in the control of bacterial genetic diversity. Acts as a ribosome collision sensor, splitting the ribosome into its 2 subunits. Detects stalled/collided 70S ribosomes which it binds and splits by an ATP-hydrolysis driven conformational change. Acts upstream of the ribosome quality control system (RQC), a ribosome-associated complex that mediates the extraction of incompletely synthesized nascent chains from stalled ribosomes and their subsequent degradation. Probably generates substrates for RQC. The protein is Endonuclease MutS2 of Clostridium perfringens (strain ATCC 13124 / DSM 756 / JCM 1290 / NCIMB 6125 / NCTC 8237 / Type A).